The following is a 633-amino-acid chain: Laccase ARB_05828 (633 aa).

The signal sequence occupies residues 1–16; that stretch reads MKRLGLAALYIGSALA. Residues 22 to 47 constitute a propeptide that is removed on maturation; the sequence is GPPSRNVPRDDFPMFNPLPSTDLNTR. N-linked (GlcNAc...) asparagine glycosylation occurs at Asn-143. 4 residues coordinate Cu cation: His-148, His-150, His-192, and His-194. An intrachain disulfide couples Cys-169 to Cys-607. The Plastocyanin-like domain occupies 224-353; the sequence is LLMTDHLHSS…GRYWVRTTPA (130 aa). Residues Asn-286 and Asn-456 are each glycosylated (N-linked (GlcNAc...) asparagine). Cu cation contacts are provided by His-508, His-511, His-513, His-568, Cys-569, His-570, and His-574.

It belongs to the multicopper oxidase family. As to quaternary structure, monomer. It depends on Cu cation as a cofactor.

It localises to the secreted. The enzyme catalyses 4 hydroquinone + O2 = 4 benzosemiquinone + 2 H2O. The protein is Laccase ARB_05828 of Arthroderma benhamiae (strain ATCC MYA-4681 / CBS 112371) (Trichophyton mentagrophytes).